The sequence spans 392 residues: Homeobox protein engrailed-1 (392 aa).

Disordered stretches follow at residues 1–100 (MEEQ…AQLH), 132–164 (ARGG…TRAP), 219–251 (KPSD…PAIL), and 282–306 (SDRP…DKRP). Low complexity predominate over residues 14–36 (SALGAAAAATPGGLSLSLSPGAS). 2 stretches are compositionally biased toward pro residues: residues 51–66 (SPQP…PCLP) and 75–84 (PPHPPPPPPQ). Low complexity predominate over residues 85-100 (HLAAPAHQPQPAAQLH). Positions 223 to 236 (TGGGGSGGGAGSPG) are enriched in gly residues. The homeobox DNA-binding region spans 303–362 (DKRPRTAFTAEQLQRLKAEFQANRYITEQRRQTLAQELSLNESQIKIWFQNKRAKIKKAT).

Belongs to the engrailed homeobox family.

The protein localises to the nucleus. Required for proper formation of the apical ectodermal ridge and correct dorsal-ventral patterning in the limb. The chain is Homeobox protein engrailed-1 (EN1) from Homo sapiens (Human).